A 572-amino-acid chain; its full sequence is Proline--tRNA ligase (572 aa).

This sequence belongs to the class-II aminoacyl-tRNA synthetase family. ProS type 1 subfamily. Homodimer.

The protein localises to the cytoplasm. It catalyses the reaction tRNA(Pro) + L-proline + ATP = L-prolyl-tRNA(Pro) + AMP + diphosphate. Its function is as follows. Catalyzes the attachment of proline to tRNA(Pro) in a two-step reaction: proline is first activated by ATP to form Pro-AMP and then transferred to the acceptor end of tRNA(Pro). As ProRS can inadvertently accommodate and process non-cognate amino acids such as alanine and cysteine, to avoid such errors it has two additional distinct editing activities against alanine. One activity is designated as 'pretransfer' editing and involves the tRNA(Pro)-independent hydrolysis of activated Ala-AMP. The other activity is designated 'posttransfer' editing and involves deacylation of mischarged Ala-tRNA(Pro). The misacylated Cys-tRNA(Pro) is not edited by ProRS. This Psychrobacter arcticus (strain DSM 17307 / VKM B-2377 / 273-4) protein is Proline--tRNA ligase.